The chain runs to 280 residues: DegV domain-containing protein TTE1491 (280 aa).

One can recognise a DegV domain in the interval 4-279 (IAIVTDSLSD…PDAAGVFFEE (276 aa)). Hexadecanoate is bound by residues threonine 61 and serine 93.

Its function is as follows. May bind long-chain fatty acids, such as palmitate, and may play a role in lipid transport or fatty acid metabolism. The sequence is that of DegV domain-containing protein TTE1491 from Caldanaerobacter subterraneus subsp. tengcongensis (strain DSM 15242 / JCM 11007 / NBRC 100824 / MB4) (Thermoanaerobacter tengcongensis).